The sequence spans 91 residues: Small ribosomal subunit protein uS19 (91 aa).

It belongs to the universal ribosomal protein uS19 family.

Protein S19 forms a complex with S13 that binds strongly to the 16S ribosomal RNA. This is Small ribosomal subunit protein uS19 from Erythrobacter litoralis (strain HTCC2594).